The primary structure comprises 337 residues: ATP-dependent 6-phosphofructokinase (337 aa).

Residue Gly-11 participates in ATP binding. 21–25 contributes to the ADP binding site; the sequence is RAVVR. Residues 72–73 and 102–105 contribute to the ATP site; these read RY and GDGS. Asp-103 lines the Mg(2+) pocket. 125–127 is a binding site for substrate; that stretch reads TID. The active-site Proton acceptor is the Asp-127. Arg-154 is an ADP binding site. Residues Arg-162 and 169–171 contribute to the substrate site; that span reads MGR. ADP is bound by residues 185 to 187, Lys-212, and 214 to 216; these read GAD and KNH. Substrate contacts are provided by residues Glu-223, Arg-245, and 251-254; that span reads HILR.

The protein belongs to the phosphofructokinase type A (PFKA) family. ATP-dependent PFK group I subfamily. Prokaryotic clade 'B1' sub-subfamily. As to quaternary structure, homotetramer. Mg(2+) is required as a cofactor.

The protein resides in the cytoplasm. The catalysed reaction is beta-D-fructose 6-phosphate + ATP = beta-D-fructose 1,6-bisphosphate + ADP + H(+). Its pathway is carbohydrate degradation; glycolysis; D-glyceraldehyde 3-phosphate and glycerone phosphate from D-glucose: step 3/4. Allosterically activated by ADP and other diphosphonucleosides, and allosterically inhibited by phosphoenolpyruvate. Its function is as follows. Catalyzes the phosphorylation of D-fructose 6-phosphate to fructose 1,6-bisphosphate by ATP, the first committing step of glycolysis. This Streptococcus pyogenes serotype M3 (strain SSI-1) protein is ATP-dependent 6-phosphofructokinase.